The chain runs to 351 residues: tRNA pseudouridine synthase D (351 aa).

The Nucleophile role is filled by Asp-81. The TRUD domain maps to 158-304 (GVPNYFGSQR…MRHERRAIEL (147 aa)).

It belongs to the pseudouridine synthase TruD family.

The enzyme catalyses uridine(13) in tRNA = pseudouridine(13) in tRNA. In terms of biological role, responsible for synthesis of pseudouridine from uracil-13 in transfer RNAs. In Aliivibrio fischeri (strain ATCC 700601 / ES114) (Vibrio fischeri), this protein is tRNA pseudouridine synthase D.